A 229-amino-acid polypeptide reads, in one-letter code: uncharacterized protein (229 aa).

This is an uncharacterized protein from Ureaplasma parvum serovar 3 (strain ATCC 700970).